A 59-amino-acid chain; its full sequence is Protein SspF (59 aa).

The protein belongs to the alpha/beta-type SASP family.

Functionally, may play some important role in either sporulation or the dormant spore. The chain is Protein SspF (sspF) from Bacillus cereus (strain ATCC 14579 / DSM 31 / CCUG 7414 / JCM 2152 / NBRC 15305 / NCIMB 9373 / NCTC 2599 / NRRL B-3711).